Here is a 144-residue protein sequence, read N- to C-terminus: Cytochrome c oxidase subunit 4 isoform 1, mitochondrial (144 aa).

Over 1-73 (SVVKSEDFSL…SFAEMNRGSN (73 aa)) the chain is Mitochondrial matrix. Lys4 is modified (N6-acetyllysine; alternate). Lys4 carries the N6-succinyllysine; alternate modification. Lys28 carries the post-translational modification N6-acetyllysine. Residues Ser31 and Ser33 each carry the phosphoserine modification. N6-acetyllysine; alternate is present on Lys35. Residue Lys35 is modified to N6-succinyllysine; alternate. Lys42 bears the N6-acetyllysine mark. Residues 74 to 99 (EWKTVVGGAMFFIGFTALIIMWQKRH) traverse the membrane as a helical segment. The Mitochondrial intermembrane portion of the chain corresponds to 100-144 (VYGPLPQSFDKEWVAKQTKRMLDMKVNPIQGLASKWDYEKNEWKK).

It belongs to the cytochrome c oxidase IV family. In terms of assembly, component of the cytochrome c oxidase (complex IV, CIV), a multisubunit enzyme composed of 14 subunits. The complex is composed of a catalytic core of 3 subunits MT-CO1, MT-CO2 and MT-CO3, encoded in the mitochondrial DNA, and 11 supernumerary subunits COX4I, COX5A, COX5B, COX6A, COX6B, COX6C, COX7A, COX7B, COX7C, COX8 and NDUFA4, which are encoded in the nuclear genome. The complex exists as a monomer or a dimer and forms supercomplexes (SCs) in the inner mitochondrial membrane with NADH-ubiquinone oxidoreductase (complex I, CI) and ubiquinol-cytochrome c oxidoreductase (cytochrome b-c1 complex, complex III, CIII), resulting in different assemblies (supercomplex SCI(1)III(2)IV(1) and megacomplex MCI(2)III(2)IV(2)). Interacts with PHB2; the interaction decreases in absence of SPHK2. Interacts with AFG1L. Interacts with ABCB7; this interaction allows the regulation of cellular iron homeostasis and cellular reactive oxygen species (ROS) levels in cardiomyocytes. Interacts with FLVCR2; this interaction occurs in the absence of heme and is disrupted upon heme binding. Interacts with IRGC.

The protein localises to the mitochondrion inner membrane. The protein operates within energy metabolism; oxidative phosphorylation. In terms of biological role, component of the cytochrome c oxidase, the last enzyme in the mitochondrial electron transport chain which drives oxidative phosphorylation. The respiratory chain contains 3 multisubunit complexes succinate dehydrogenase (complex II, CII), ubiquinol-cytochrome c oxidoreductase (cytochrome b-c1 complex, complex III, CIII) and cytochrome c oxidase (complex IV, CIV), that cooperate to transfer electrons derived from NADH and succinate to molecular oxygen, creating an electrochemical gradient over the inner membrane that drives transmembrane transport and the ATP synthase. Cytochrome c oxidase is the component of the respiratory chain that catalyzes the reduction of oxygen to water. Electrons originating from reduced cytochrome c in the intermembrane space (IMS) are transferred via the dinuclear copper A center (CU(A)) of subunit 2 and heme A of subunit 1 to the active site in subunit 1, a binuclear center (BNC) formed by heme A3 and copper B (CU(B)). The BNC reduces molecular oxygen to 2 water molecules using 4 electrons from cytochrome c in the IMS and 4 protons from the mitochondrial matrix. The protein is Cytochrome c oxidase subunit 4 isoform 1, mitochondrial (COX4I1) of Pongo pygmaeus (Bornean orangutan).